The sequence spans 496 residues: Hexokinase-1 (496 aa).

A helical transmembrane segment spans residues 4-24 (VAVGATVVCTAAVCAVAVLVV). The Hexokinase domain occupies 35 to 487 (GRVLAILKAF…SGIGAALLAA (453 aa)). Residues 90-228 (SGDEKGLFYA…GLDMRIAALV (139 aa)) form a hexokinase small subdomain region. ADP is bound by residues Gly-104, Thr-105, and Asn-106. D-glucose is bound by residues Thr-194, Lys-195, Asn-229, and Asp-230. The segment at 229–476 (NDTVGTLAGG…GSVEVTHSND (248 aa)) is hexokinase large subdomain. Thr-253 is a binding site for ADP. Positions 256, 284, and 315 each coordinate D-glucose. Gly-441 lines the ADP pocket.

Belongs to the hexokinase family. Interacts with RPT5B in nucleus. Interacts with RHIP1. Interacts with KING1 in mitochondria. Interacts with CLF (via SANT domain) and EZA1/SWN (via SANT domain) in nucleus. Highly expressed in flowers and siliques, at intermediate levels in roots and stems, and at lower levels in rosette and cauline leaves.

It is found in the mitochondrion outer membrane. The protein resides in the nucleus. It carries out the reaction a D-hexose + ATP = a D-hexose 6-phosphate + ADP + H(+). It catalyses the reaction D-fructose + ATP = D-fructose 6-phosphate + ADP + H(+). The catalysed reaction is D-glucose + ATP = D-glucose 6-phosphate + ADP + H(+). It participates in carbohydrate metabolism; hexose metabolism. Its pathway is carbohydrate degradation; glycolysis; D-glyceraldehyde 3-phosphate and glycerone phosphate from D-glucose: step 1/4. Its function is as follows. Fructose and glucose phosphorylating enzyme. May be involved in the phosphorylation of glucose during the export from mitochondrion to cytosol. Acts as a sugar sensor which may regulate sugar-dependent gene repression or activation. Mediates the effects of sugar on plant growth and development independently of its catalytic activity or the sugar metabolism. May regulate the execution of program cell death in plant cells. Promotes roots and leaves growth. Together with sugar, is involved in the regulation of the expression of aquaporin genes, and reduces leaf water conductance, to coordinate sugar levels with the loss of water through transpiration. Regulates cell proliferation and expansion early during leaf development. Involved in sucrose-induced leaf growth stimulation independently of GPT2. May participate to the stimulation of hypocotyl elongation under long-day (LD) conditions. Forms a nuclear complex with CLF and EZA1/SWN to target common glucose-responsive genes and regulate glucose signaling. Is required for CLF- and EZA1/SWN-mediated histone H3 trimethylation on 'Lys-27' (H3K27me3) and glucose-mediated gene repression. The chain is Hexokinase-1 from Arabidopsis thaliana (Mouse-ear cress).